The following is a 360-amino-acid chain: Peptide chain release factor 1 (360 aa).

Gln-235 is modified (N5-methylglutamine). The span at 280-293 shows a compositional bias: basic and acidic residues; the sequence is DKQSHEQQAKEAAT. A disordered region spans residues 280–300; that stretch reads DKQSHEQQAKEAATRKSLIGS.

This sequence belongs to the prokaryotic/mitochondrial release factor family. In terms of processing, methylated by PrmC. Methylation increases the termination efficiency of RF1.

Its subcellular location is the cytoplasm. Its function is as follows. Peptide chain release factor 1 directs the termination of translation in response to the peptide chain termination codons UAG and UAA. This Paraburkholderia xenovorans (strain LB400) protein is Peptide chain release factor 1.